Here is a 74-residue protein sequence, read N- to C-terminus: MSEIPTVVTPTKDYKRLQAKLDEIENTVENTNAEIIQRTGKKAGRDVGIAYGLAIGFIFVYVLGTVLPLFDLIK.

A helical membrane pass occupies residues valine 47 to leucine 67.

The protein belongs to the MtrG family. The complex is composed of 8 subunits; MtrA, MtrB, MtrC, MtrD, MtrE, MtrF, MtrG and MtrH.

It is found in the cell membrane. It catalyses the reaction 5-methyl-5,6,7,8-tetrahydromethanopterin + coenzyme M + 2 Na(+)(in) = 5,6,7,8-tetrahydromethanopterin + methyl-coenzyme M + 2 Na(+)(out). The protein operates within one-carbon metabolism; methanogenesis from CO(2); methyl-coenzyme M from 5,10-methylene-5,6,7,8-tetrahydromethanopterin: step 2/2. In terms of biological role, part of a complex that catalyzes the formation of methyl-coenzyme M and tetrahydromethanopterin from coenzyme M and methyl-tetrahydromethanopterin. This is an energy-conserving, sodium-ion translocating step. The protein is Tetrahydromethanopterin S-methyltransferase subunit G of Methanococcus maripaludis (strain DSM 14266 / JCM 13030 / NBRC 101832 / S2 / LL).